Consider the following 92-residue polypeptide: Small ribosomal subunit protein uS19c (92 aa).

The protein belongs to the universal ribosomal protein uS19 family.

The protein localises to the plastid. It localises to the chloroplast. Its function is as follows. Protein S19 forms a complex with S13 that binds strongly to the 16S ribosomal RNA. This Cyanidium caldarium (Red alga) protein is Small ribosomal subunit protein uS19c.